The sequence spans 372 residues: MTSIEPTHTGKKVIVGMSGGVDSSVSAYLLMQQGYQVEGLFMKNWEEDDNDEYCAAAEDLKDAQAVCDKLGIKLHTVNFAAEYWDNVFEYFLAEYKAGRTPNPDIMCNKEIKFKAFLEFADDILDADYIAMGHYVRRRDNEDGTTQMLRGVDNNKDQSYFLYTLSHEQVARSLFPVGELEKHEVREIAKQMGLITHDKKDSTGICFIGERKFTEFLGNYLPAQPGNIETADGEVIGTHQGLMYHTLGQRKGLGIGGMKNSNDDPWYVVDKDLKRNVLVVGQGGHHPRLMSNGMLVNQLHWVDRKGPINGSQIVVKTRYRQQDIPCTLTYLDDNTLKVVFDEPVAAVTPGQSAVFYDGEVCLGGGIIDQLIRG.

ATP contacts are provided by residues 16–23 (GMSGGVDS) and methionine 42. Residues 102–104 (NPD) are interaction with target base in tRNA. Residue cysteine 107 is the Nucleophile of the active site. A disulfide bridge connects residues cysteine 107 and cysteine 205. Glycine 132 lines the ATP pocket. The interaction with tRNA stretch occupies residues 155 to 157 (KDQ). Cysteine 205 functions as the Cysteine persulfide intermediate in the catalytic mechanism. The tract at residues 317-318 (RY) is interaction with tRNA.

Belongs to the MnmA/TRMU family.

The protein localises to the cytoplasm. It catalyses the reaction S-sulfanyl-L-cysteinyl-[protein] + uridine(34) in tRNA + AH2 + ATP = 2-thiouridine(34) in tRNA + L-cysteinyl-[protein] + A + AMP + diphosphate + H(+). Functionally, catalyzes the 2-thiolation of uridine at the wobble position (U34) of tRNA, leading to the formation of s(2)U34. The chain is tRNA-specific 2-thiouridylase MnmA from Shewanella oneidensis (strain ATCC 700550 / JCM 31522 / CIP 106686 / LMG 19005 / NCIMB 14063 / MR-1).